The following is a 490-amino-acid chain: Cytochrome P450 2C12, female-specific (490 aa).

Heme is bound at residue Cys435.

The protein belongs to the cytochrome P450 family. The cofactor is heme.

It is found in the endoplasmic reticulum membrane. It localises to the microsome membrane. It catalyses the reaction an organic molecule + reduced [NADPH--hemoprotein reductase] + O2 = an alcohol + oxidized [NADPH--hemoprotein reductase] + H2O + H(+). Functionally, this P450 is active in 15-beta-hydroxylation of steroid sulfates. The polypeptide is Cytochrome P450 2C12, female-specific (Cyp2c12) (Rattus norvegicus (Rat)).